Here is a 108-residue protein sequence, read N- to C-terminus: Thiosulfate sulfurtransferase GlpE (108 aa).

In terms of domain architecture, Rhodanese spans 18 to 106 (ENEGATLADI…WERSGLPIET (89 aa)). Catalysis depends on C66, which acts as the Cysteine persulfide intermediate.

This sequence belongs to the GlpE family.

Its subcellular location is the cytoplasm. The enzyme catalyses thiosulfate + hydrogen cyanide = thiocyanate + sulfite + 2 H(+). It catalyses the reaction thiosulfate + [thioredoxin]-dithiol = [thioredoxin]-disulfide + hydrogen sulfide + sulfite + 2 H(+). Transferase that catalyzes the transfer of sulfur from thiosulfate to thiophilic acceptors such as cyanide or dithiols. May function in a CysM-independent thiosulfate assimilation pathway by catalyzing the conversion of thiosulfate to sulfite, which can then be used for L-cysteine biosynthesis. The chain is Thiosulfate sulfurtransferase GlpE from Actinobacillus pleuropneumoniae serotype 5b (strain L20).